The chain runs to 494 residues: Catalase A (494 aa).

The span at 1 to 23 (MTDRPTITTTAGAPVPDNQNSLT) shows a compositional bias: polar residues. Residues 1–25 (MTDRPTITTTAGAPVPDNQNSLTAG) form a disordered region. Active-site residues include histidine 55 and asparagine 127. Tyrosine 337 lines the heme pocket.

It belongs to the catalase family. It depends on heme as a cofactor.

It localises to the periplasm. It catalyses the reaction 2 H2O2 = O2 + 2 H2O. Functionally, decomposes hydrogen peroxide into water and oxygen; serves to protect cells from the toxic effects of hydrogen peroxide. This chain is Catalase A (katA), found in Rhizobium meliloti (strain 1021) (Ensifer meliloti).